A 393-amino-acid chain; its full sequence is Acetate kinase (393 aa).

N6 is a Mg(2+) binding site. K13 contacts ATP. Substrate is bound at residue R87. D143 (proton donor/acceptor) is an active-site residue. Residues 203-207, 278-280, and 326-330 contribute to the ATP site; these read HLGNG, DMR, and GIGEN. E380 serves as a coordination point for Mg(2+).

Belongs to the acetokinase family. Homodimer. The cofactor is Mg(2+). Mn(2+) is required as a cofactor.

It is found in the cytoplasm. It catalyses the reaction acetate + ATP = acetyl phosphate + ADP. It functions in the pathway metabolic intermediate biosynthesis; acetyl-CoA biosynthesis; acetyl-CoA from acetate: step 1/2. Functionally, catalyzes the formation of acetyl phosphate from acetate and ATP. Can also catalyze the reverse reaction. The protein is Acetate kinase of Mycoplasma mycoides subsp. mycoides SC (strain CCUG 32753 / NCTC 10114 / PG1).